The chain runs to 562 residues: NAD-dependent malic enzyme (562 aa).

Y101 functions as the Proton donor in the catalytic mechanism. R154 contacts NAD(+). The Proton acceptor role is filled by K172. The a divalent metal cation site is built by E243, D244, and D267. NAD(+)-binding residues include D267 and N415.

This sequence belongs to the malic enzymes family. In terms of assembly, homotetramer. The cofactor is Mg(2+). Mn(2+) is required as a cofactor.

It carries out the reaction (S)-malate + NAD(+) = pyruvate + CO2 + NADH. The enzyme catalyses oxaloacetate + H(+) = pyruvate + CO2. This chain is NAD-dependent malic enzyme, found in Shewanella frigidimarina (strain NCIMB 400).